The following is a 432-amino-acid chain: D-amino acid dehydrogenase (432 aa).

An FAD-binding site is contributed by V3–W17.

This sequence belongs to the DadA oxidoreductase family. FAD is required as a cofactor.

The catalysed reaction is a D-alpha-amino acid + A + H2O = a 2-oxocarboxylate + AH2 + NH4(+). Its pathway is amino-acid degradation; D-alanine degradation; NH(3) and pyruvate from D-alanine: step 1/1. In terms of biological role, oxidative deamination of D-amino acids. This is D-amino acid dehydrogenase from Shigella sonnei (strain Ss046).